We begin with the raw amino-acid sequence, 248 residues long: MARRRRHRGPRRPRPPGPTGAVPTAQSQVTSTPNSEPAVRSAPAAAPPPPPAGGPPPSCSLLLRQWLHVPESASDDDDDDDWPDSPPPEPAPEARPTAAAPRPRPPPPGVGPGGGADPSHPPSRPFRLPPRLALRLRVTAEHLARLRLRRAGGEGAPEPPATPATPATPATPATPARVRFSPHVRVRHLVVWASAARLARRGSWARERADRARFRRRVAEAEAVIGPCLGPEARARALARGAGPANSV.

A compositionally biased stretch (basic residues) spans 1–14; that stretch reads MARRRRHRGPRRPR. Residues 1–16 are required for nucleolar localization; that stretch reads MARRRRHRGPRRPRPP. Disordered regions lie at residues 1-129 and 149-174; these read MARR…FRLP and RRAGGEGAPEPPATPATPATPATPAT. Residues 24–35 are compositionally biased toward polar residues; the sequence is TAQSQVTSTPNS. The span at 45 to 58 shows a compositional bias: pro residues; that stretch reads AAPPPPPAGGPPPS. Positions 73 to 83 are enriched in acidic residues; the sequence is ASDDDDDDDWP. Pro residues-rich tracts occupy residues 84 to 93 and 119 to 128; these read DSPPPEPAPE and SHPPSRPFRL. A Nuclear export signal motif is present at residues 128–137; sequence LPPRLALRLR. 5 tandem repeats follow at residues 161–163, 164–166, 167–169, 170–172, and 173–175. The segment at 161-175 is 5 X 3 AA tandem repeats of A-T-P; that stretch reads ATPATPATPATPATP. The span at 164–174 shows a compositional bias: low complexity; the sequence is ATPATPATPAT. A binding to PP1CA region spans residues 175–188; that stretch reads PARVRFSPHVRVRH. An interaction with host PPP1CA region spans residues 175-188; the sequence is PARVRFSPHVRVRH. The interval 190–248 is important for interferon resistance; the sequence is VVWASAARLARRGSWARERADRARFRRRVAEAEAVIGPCLGPEARARALARGAGPANSV. The Bipartite nuclear localization signal motif lies at 200-218; sequence RRGSWARERADRARFRRRV. An interaction with host EIF2S1/EIF-2ALPHA region spans residues 218 to 233; sequence VAEAEAVIGPCLGPEA.

This sequence belongs to the PPP1R15 family. In terms of assembly, interacts with host PPP1CA; this interaction forms a high-molecular-weight complex that dephosphorylates EIF2S1/eIF-2alpha. Interacts with host EIF2S1/eIF-2alpha; this interaction is crucial for the specific dephosphorylation of EIF2S1/eIF-2alpha by PPP1CA. Binds to proliferating cell nuclear antigen (PCNA), which may release host cells from growth arrest and facilitate viral replication. Interacts (via N-terminus) with host C1QBP; this interaction allows C1QBP to be recruited to the inner nuclear membrane by ICP34.5. Interacts with host PRKCA. Interacts with protein UL31. Interacts with host STING/TMEM173; this interaction inhibits the intracellular DNA sensing pathway. Interacts with host BECN1; this interaction modulates host autophagy.

The protein resides in the host cytoplasm. The protein localises to the host nucleus. Its subcellular location is the host nucleolus. It localises to the virion. In terms of biological role, inhibits the establishment of the immune response and of the integrated stress response (ISR) in the infected cell. Plays essential roles in viral nuclear egress to mediate capsid transit across the nuclear membrane. Facilitates nuclear egress cooperatively with host C1QBP and protein kinase C/PKC to induce lamin A/C phosphorylation and subsequent reorganization. In turn, lamina disassembles and nuclear egress occurs. Recruits the serine/threonine protein phosphatase PPP1CA/PP1-alpha to dephosphorylate the translation initiation factor EIF2S1/eIF-2alpha, thereby couteracting the host shutoff of protein synthesis involving double-stranded RNA-dependent protein kinase EIF2AK2/PKR. In turn, controls host IRF3 activation and subsequently inhibits host interferon response. Controls the DNA sensing pathway by interacting with and inhibiting host STING/TMEM173. Also down-modulates the host MHC class II proteins cell surface expression. Acts as a neurovirulence factor that has a profound effect on the growth of the virus in central nervous system tissue, by interacting with host BECN1 and thereby antagonizing the host autophagy response. This is Neurovirulence factor ICP34.5 (ICP34.5) from Homo sapiens (Human).